We begin with the raw amino-acid sequence, 354 residues long: UDP-3-O-acylglucosamine N-acyltransferase (354 aa).

The active-site Proton acceptor is H258.

It belongs to the transferase hexapeptide repeat family. LpxD subfamily. As to quaternary structure, homotrimer.

The catalysed reaction is a UDP-3-O-[(3R)-3-hydroxyacyl]-alpha-D-glucosamine + a (3R)-hydroxyacyl-[ACP] = a UDP-2-N,3-O-bis[(3R)-3-hydroxyacyl]-alpha-D-glucosamine + holo-[ACP] + H(+). It functions in the pathway bacterial outer membrane biogenesis; LPS lipid A biosynthesis. Functionally, catalyzes the N-acylation of UDP-3-O-acylglucosamine using 3-hydroxyacyl-ACP as the acyl donor. Is involved in the biosynthesis of lipid A, a phosphorylated glycolipid that anchors the lipopolysaccharide to the outer membrane of the cell. This chain is UDP-3-O-acylglucosamine N-acyltransferase, found in Sinorhizobium medicae (strain WSM419) (Ensifer medicae).